Reading from the N-terminus, the 227-residue chain is Ribonuclease 3 (227 aa).

Residues Leu-4–Gly-126 enclose the RNase III domain. Glu-39 serves as a coordination point for Mg(2+). Asp-43 is a catalytic residue. Residues Asp-112 and Glu-115 each coordinate Mg(2+). Glu-115 is a catalytic residue. The 74-residue stretch at Asp-153 to Ile-226 folds into the DRBM domain.

The protein belongs to the ribonuclease III family. In terms of assembly, homodimer. It depends on Mg(2+) as a cofactor.

Its subcellular location is the cytoplasm. It carries out the reaction Endonucleolytic cleavage to 5'-phosphomonoester.. Its function is as follows. Digests double-stranded RNA. Involved in the processing of primary rRNA transcript to yield the immediate precursors to the large and small rRNAs (23S and 16S). Processes some mRNAs, and tRNAs when they are encoded in the rRNA operon. Processes pre-crRNA and tracrRNA of type II CRISPR loci if present in the organism. The sequence is that of Ribonuclease 3 from Haemophilus influenzae (strain PittGG).